The sequence spans 731 residues: MSRVLLRGIQCHACRSNVIRSFISLSDVAITPLAGGSRSTAQARPPPLSRNFSSQHAKLFSNQPSDNAELSVDPIPEIHNGEEPEGQPEESQEHIPWYLKEEQVEETIPHPLRRQQPLPPLPENPPPILENLLEHISVDIGLDNLSLLDLRRLDPPPALGANLIMIFGTARGVKHLNVSADRLCRWLRTTYKLRPDADGLLGRNELKIKLRRKARRAKLAKSAKSTLTQPDDGITTGWICVDVGTVEGGQFRKPEEELRKVGFVGFGTVVEGTRIVVQMMTEEKREEIDLEGLWRQKLERNSLENEGLPQPQAAAPQEAGDIHEQLTIPPTNINHQISHATQISPNYEQRRGISTGSRYQDATSDTWGTSRISPNGETTHLEPSAPSSPTSLSHRFKNIPPHEAIYDLGQGTHDRCSTAFLQQFYQEVARAPSELASSRRIELMCIAIELHHPGYRKPDLFQAIQEHILSNYALTRAQFLQILDAFLSFKPDLTSNPPRLLLPNADMELALQIIDHAGLRGLNLLDSTILVKLFVGVSFRAQVYPVEQKDLPNSPVIGNRIPVPLNTCDAVKRVQSRLTRVKTAAKISFTAEQYMKILRVLFDQGSYSGFWNTWEDMALAGVARDKALYVFLFQLHAESDGWQCFTTQLLNCIPMMERENPPVHLDGELAEVTQKCITIAYPEIIDRVERNEQNPLVRMWHRCRVAIENAAAAGGRGQDSTAPYVCNHSDI.

A mitochondrion-targeting transit peptide spans 1 to 52; that stretch reads MSRVLLRGIQCHACRSNVIRSFISLSDVAITPLAGGSRSTAQARPPPLSRNF. Disordered regions lie at residues 61–93 and 356–396; these read SNQP…ESQE and GSRY…SHRF. Over residues 356-378 the composition is skewed to polar residues; the sequence is GSRYQDATSDTWGTSRISPNGET.

The protein belongs to the ATP25 family.

The protein localises to the mitochondrion inner membrane. Functionally, probable mitochondrial mRNA stabilization factor. This Ajellomyces capsulatus (strain G186AR / H82 / ATCC MYA-2454 / RMSCC 2432) (Darling's disease fungus) protein is ATPase synthesis protein 25, mitochondrial (ATP25).